The chain runs to 301 residues: GTPase Era (301 aa).

The region spanning 8–174 (KSGFVALVGR…LKTLKDYLPE (167 aa)) is the Era-type G domain. The segment at 16–23 (GRPNVGKS) is G1. Residue 16–23 (GRPNVGKS) participates in GTP binding. Positions 42–46 (QTTRN) are G2. The interval 63–66 (DTPG) is G3. Residues 63–67 (DTPGI) and 124–127 (NKID) each bind GTP. Positions 124 to 127 (NKID) are G4. A G5 region spans residues 153-155 (ISA). The KH type-2 domain maps to 197–282 (IREQILRLTD…NLKLWVKVRR (86 aa)).

This sequence belongs to the TRAFAC class TrmE-Era-EngA-EngB-Septin-like GTPase superfamily. Era GTPase family. In terms of assembly, monomer.

It localises to the cytoplasm. Its subcellular location is the cell membrane. Its function is as follows. An essential GTPase that binds both GDP and GTP, with rapid nucleotide exchange. Plays a role in 16S rRNA processing and 30S ribosomal subunit biogenesis and possibly also in cell cycle regulation and energy metabolism. This Lactobacillus delbrueckii subsp. bulgaricus (strain ATCC 11842 / DSM 20081 / BCRC 10696 / JCM 1002 / NBRC 13953 / NCIMB 11778 / NCTC 12712 / WDCM 00102 / Lb 14) protein is GTPase Era.